The following is a 116-amino-acid chain: Protein Rev (116 aa).

2 positions are modified to phosphoserine; by host CK2: Ser-5 and Ser-8. A homomultimerization region spans residues 18-26 (CIKILYQSN). The disordered stretch occupies residues 27 to 47 (PYPKPEGTRQARRNRRRRWRA). Positions 34–50 (TRQARRNRRRRWRARQR) match the Nuclear localization signal and RNA-binding (RRE) motif. A compositionally biased stretch (basic residues) spans 36-47 (QARRNRRRRWRA). The short motif at 73–84 (LQLPPLERLHIN) is the Nuclear export signal and binding to XPO1 element. Positions 87–116 (EDCGQGPEEGVGSSQISGESHAVLESGTKE) are disordered. Position 99 is a phosphoserine; by host (Ser-99).

This sequence belongs to the HIV-1 REV protein family. Homomultimer; when bound to the RRE. Multimeric assembly is essential for activity and may involve XPO1. Binds to human KPNB1, XPO1, TNPO1, RANBP5 and IPO7. Interacts with the viral Integrase. Interacts with human KHDRBS1. Interacts with human NAP1; this interaction decreases Rev multimerization and stimulates its activity. Interacts with human DEAD-box helicases DDX3 and DDX24; these interactions may serve for viral RNA export to the cytoplasm and packaging, respectively. Interacts with human PSIP1; this interaction may inhibit HIV-1 DNA integration by promoting dissociation of the Integrase-LEDGF/p75 complex. In terms of processing, asymmetrically arginine dimethylated at one site by host PRMT6. Methylation impairs the RNA-binding activity and export of viral RNA from the nucleus to the cytoplasm. Phosphorylated by protein kinase CK2. Presence of, and maybe binding to the N-terminus of the regulatory beta subunit of CK2 is necessary for CK2-mediated Rev's phosphorylation.

The protein resides in the host nucleus. Its subcellular location is the host nucleolus. It is found in the host cytoplasm. Escorts unspliced or incompletely spliced viral pre-mRNAs (late transcripts) out of the nucleus of infected cells. These pre-mRNAs carry a recognition sequence called Rev responsive element (RRE) located in the env gene, that is not present in fully spliced viral mRNAs (early transcripts). This function is essential since most viral proteins are translated from unspliced or partially spliced pre-mRNAs which cannot exit the nucleus by the pathway used by fully processed cellular mRNAs. Rev itself is translated from a fully spliced mRNA that readily exits the nucleus. Rev's nuclear localization signal (NLS) binds directly to KPNB1/Importin beta-1 without previous binding to KPNA1/Importin alpha-1. KPNB1 binds to the GDP bound form of RAN (Ran-GDP) and targets Rev to the nucleus. In the nucleus, the conversion from Ran-GDP to Ran-GTP dissociates Rev from KPNB1 and allows Rev's binding to the RRE in viral pre-mRNAs. Rev multimerization on the RRE via cooperative assembly exposes its nuclear export signal (NES) to the surface. Rev can then form a complex with XPO1/CRM1 and Ran-GTP, leading to nuclear export of the complex. Conversion from Ran-GTP to Ran-GDP mediates dissociation of the Rev/RRE/XPO1/RAN complex, so that Rev can return to the nucleus for a subsequent round of export. Beside KPNB1, also seems to interact with TNPO1/Transportin-1, RANBP5/IPO5 and IPO7/RANBP7 for nuclear import. The nucleoporin-like HRB/RIP is an essential cofactor that probably indirectly interacts with Rev to release HIV RNAs from the perinuclear region to the cytoplasm. The chain is Protein Rev from Human immunodeficiency virus type 1 group M subtype F1 (isolate VI850) (HIV-1).